A 568-amino-acid chain; its full sequence is Probable WRKY transcription factor 34 (568 aa).

Residues 172 to 236 constitute a DNA-binding region (WRKY 1); sequence ACCAPADDGY…YTGDHIHSKP (65 aa). Zn(2+) is bound by residues C203, C208, H231, and H233. 2 disordered regions span residues 230 to 252 and 337 to 360; these read DHIH…TGQD and KRRK…EPRV. A DNA-binding region (WRKY 2) is located at residues 366 to 431; it reads SDIDILDDGY…YIGKHTHVVP (66 aa). Residues C397, C402, H426, and H428 each contribute to the Zn(2+) site.

Belongs to the WRKY group I family.

The protein localises to the nucleus. Functionally, transcription factor. Interacts specifically with the W box (5'-(T)TGAC[CT]-3'), a frequently occurring elicitor-responsive cis-acting element. The polypeptide is Probable WRKY transcription factor 34 (WRKY34) (Arabidopsis thaliana (Mouse-ear cress)).